The sequence spans 432 residues: Glutamate--tRNA ligase 2 (432 aa).

Residues 6-16 carry the 'HIGH' region motif; it reads PSPTGDMHIGN. Residues 235–239 carry the 'KMSKS' region motif; that stretch reads KMSKR. Lys-238 contacts ATP.

Belongs to the class-I aminoacyl-tRNA synthetase family. Glutamate--tRNA ligase type 1 subfamily. Monomer.

The protein resides in the cytoplasm. The enzyme catalyses tRNA(Glu) + L-glutamate + ATP = L-glutamyl-tRNA(Glu) + AMP + diphosphate. In terms of biological role, catalyzes the attachment of glutamate to tRNA(Glu) in a two-step reaction: glutamate is first activated by ATP to form Glu-AMP and then transferred to the acceptor end of tRNA(Glu). This Sulfurimonas denitrificans (strain ATCC 33889 / DSM 1251) (Thiomicrospira denitrificans (strain ATCC 33889 / DSM 1251)) protein is Glutamate--tRNA ligase 2.